We begin with the raw amino-acid sequence, 212 residues long: Thymidylate kinase (212 aa).

Gly-7–Thr-14 is a binding site for ATP.

This sequence belongs to the thymidylate kinase family.

The catalysed reaction is dTMP + ATP = dTDP + ADP. In terms of biological role, phosphorylation of dTMP to form dTDP in both de novo and salvage pathways of dTTP synthesis. This chain is Thymidylate kinase, found in Gloeobacter violaceus (strain ATCC 29082 / PCC 7421).